Consider the following 358-residue polypeptide: D-alanine--D-alanine ligase (358 aa).

In terms of domain architecture, ATP-grasp spans 136–341; it reads KYILQAAGVP…YGDLIEELIQ (206 aa). 169-224 serves as a coordination point for ATP; the sequence is EGSLLYPMFVKPANMGSSVGISKAENREELQNALALAYQYDSRAIVEQGIEAREIE. Mg(2+) is bound by residues Asp-295, Glu-308, and Asn-310.

The protein belongs to the D-alanine--D-alanine ligase family. Mg(2+) is required as a cofactor. Mn(2+) serves as cofactor.

It localises to the cytoplasm. The enzyme catalyses 2 D-alanine + ATP = D-alanyl-D-alanine + ADP + phosphate + H(+). The protein operates within cell wall biogenesis; peptidoglycan biosynthesis. In terms of biological role, cell wall formation. The polypeptide is D-alanine--D-alanine ligase (Enterococcus hirae (strain ATCC 9790 / DSM 20160 / JCM 8729 / LMG 6399 / NBRC 3181 / NCIMB 6459 / NCDO 1258 / NCTC 12367 / WDCM 00089 / R)).